The primary structure comprises 415 residues: Histidine--tRNA ligase (415 aa).

This sequence belongs to the class-II aminoacyl-tRNA synthetase family. As to quaternary structure, homodimer.

Its subcellular location is the cytoplasm. It carries out the reaction tRNA(His) + L-histidine + ATP = L-histidyl-tRNA(His) + AMP + diphosphate + H(+). This Rickettsia bellii (strain RML369-C) protein is Histidine--tRNA ligase.